The chain runs to 310 residues: Homoserine kinase (310 aa).

An ATP-binding site is contributed by Pro91–Cys101.

Belongs to the GHMP kinase family. Homoserine kinase subfamily.

It localises to the cytoplasm. The enzyme catalyses L-homoserine + ATP = O-phospho-L-homoserine + ADP + H(+). It functions in the pathway amino-acid biosynthesis; L-threonine biosynthesis; L-threonine from L-aspartate: step 4/5. Catalyzes the ATP-dependent phosphorylation of L-homoserine to L-homoserine phosphate. In Escherichia coli (strain SMS-3-5 / SECEC), this protein is Homoserine kinase.